The primary structure comprises 120 residues: NADH-quinone oxidoreductase subunit A (120 aa).

Transmembrane regions (helical) follow at residues 6–26 (YGII…ALAT), 63–83 (FLYA…YPWA), and 89–109 (LGLF…LGLW).

The protein belongs to the complex I subunit 3 family. As to quaternary structure, NDH-1 is composed of 14 different subunits. Subunits NuoA, H, J, K, L, M, N constitute the membrane sector of the complex.

It localises to the cell membrane. It carries out the reaction a quinone + NADH + 5 H(+)(in) = a quinol + NAD(+) + 4 H(+)(out). In terms of biological role, NDH-1 shuttles electrons from NADH, via FMN and iron-sulfur (Fe-S) centers, to quinones in the respiratory chain. The immediate electron acceptor for the enzyme in this species is believed to be a menaquinone. Couples the redox reaction to proton translocation (for every two electrons transferred, four hydrogen ions are translocated across the cytoplasmic membrane), and thus conserves the redox energy in a proton gradient. The chain is NADH-quinone oxidoreductase subunit A from Moorella thermoacetica (strain ATCC 39073 / JCM 9320).